Reading from the N-terminus, the 317-residue chain is MKNGIAFRTIGEEFDGFLLIKESTRGTTSNGKPFLTLILRDASGEIEAKLWDATKDDEETLIPEQIIQVTGEINQFRGKHQLKILSIRLSQPMDNVQVTDFLGKAPMEKEELAEKLTEAIFEMENPKIQRLVRAFIKKYQEELLTYPAATKNHHEFASGLAYHVVSMLAIGKELHKLYPEINRDLLYAGIILHDIGKIKELSGVVSTTYTLEGKMLGHIPMMVEEIGLMANELQIEGEEVLILKHLVLSHHGKAEWGSPTPPLVREAELLHLIDLIDAKMNMLGRALEKIQPGEFTERLFAMDNRAFYKPNFEENEG.

Residues 17–90 (FLLIKESTRG…QLKILSIRLS (74 aa)) constitute a DNA-binding region (OB). Residues 163–279 (HVVSMLAIGK…LHLIDLIDAK (117 aa)) enclose the HD domain.

This sequence belongs to the YhaM family.

In terms of biological role, shows a 3'-5' exoribonuclease activity. The protein is 3'-5' exoribonuclease YhaM of Oceanobacillus iheyensis (strain DSM 14371 / CIP 107618 / JCM 11309 / KCTC 3954 / HTE831).